A 235-amino-acid polypeptide reads, in one-letter code: Large ribosomal subunit protein uL1 (235 aa).

It belongs to the universal ribosomal protein uL1 family. In terms of assembly, part of the 50S ribosomal subunit.

Functionally, binds directly to 23S rRNA. The L1 stalk is quite mobile in the ribosome, and is involved in E site tRNA release. Its function is as follows. Protein L1 is also a translational repressor protein, it controls the translation of the L11 operon by binding to its mRNA. This chain is Large ribosomal subunit protein uL1, found in Mycolicibacterium vanbaalenii (strain DSM 7251 / JCM 13017 / BCRC 16820 / KCTC 9966 / NRRL B-24157 / PYR-1) (Mycobacterium vanbaalenii).